A 314-amino-acid polypeptide reads, in one-letter code: 2-desacetyl-2-hydroxyethyl bacteriochlorophyllide A dehydrogenase (314 aa).

Its pathway is porphyrin-containing compound metabolism; bacteriochlorophyll biosynthesis (light-independent). In terms of biological role, this protein catalyzes the penultimate step in bacteriochlorophyll a biosynthesis. This Rhodobacter capsulatus (strain ATCC BAA-309 / NBRC 16581 / SB1003) protein is 2-desacetyl-2-hydroxyethyl bacteriochlorophyllide A dehydrogenase (bchC).